Reading from the N-terminus, the 143-residue chain is Large-conductance mechanosensitive channel (143 aa).

2 helical membrane-spanning segments follow: residues 19–39 (VGVI…ADVI) and 81–101 (GSFL…FLVV).

It belongs to the MscL family. Homopentamer.

It is found in the cell inner membrane. Functionally, channel that opens in response to stretch forces in the membrane lipid bilayer. May participate in the regulation of osmotic pressure changes within the cell. This chain is Large-conductance mechanosensitive channel, found in Rhodopseudomonas palustris (strain HaA2).